Reading from the N-terminus, the 121-residue chain is NAD(P)H-quinone oxidoreductase subunit 3, chloroplastic (121 aa).

The next 3 membrane-spanning stretches (helical) occupy residues 10 to 30 (FWAFLLIACLIPVLAISVSNL), 65 to 85 (MFALVFVIFDVETVFLYPWAM), and 90 to 110 (LGIIAFAEVLVFVIILIIGLI).

The protein belongs to the complex I subunit 3 family. NDH is composed of at least 16 different subunits, 5 of which are encoded in the nucleus.

It localises to the plastid. Its subcellular location is the chloroplast thylakoid membrane. The enzyme catalyses a plastoquinone + NADH + (n+1) H(+)(in) = a plastoquinol + NAD(+) + n H(+)(out). The catalysed reaction is a plastoquinone + NADPH + (n+1) H(+)(in) = a plastoquinol + NADP(+) + n H(+)(out). Its function is as follows. NDH shuttles electrons from NAD(P)H:plastoquinone, via FMN and iron-sulfur (Fe-S) centers, to quinones in the photosynthetic chain and possibly in a chloroplast respiratory chain. The immediate electron acceptor for the enzyme in this species is believed to be plastoquinone. Couples the redox reaction to proton translocation, and thus conserves the redox energy in a proton gradient. In Staurastrum punctulatum (Green alga), this protein is NAD(P)H-quinone oxidoreductase subunit 3, chloroplastic.